The following is a 164-amino-acid chain: UPF0114 protein Sbal223_3668 (164 aa).

Transmembrane regions (helical) follow at residues 15–35, 53–73, 108–128, and 136–156; these read IMAP…IKFF, LVLV…IVMV, KVAA…FMDV, and IMWY…MGYL.

It belongs to the UPF0114 family.

It localises to the cell membrane. This chain is UPF0114 protein Sbal223_3668, found in Shewanella baltica (strain OS223).